Reading from the N-terminus, the 109-residue chain is Small ribosomal subunit protein bS6c (109 aa).

It belongs to the bacterial ribosomal protein bS6 family.

It is found in the plastid. The protein resides in the chloroplast. Its function is as follows. Binds together with bS18 to 16S ribosomal RNA. The polypeptide is Small ribosomal subunit protein bS6c (Pyropia yezoensis (Susabi-nori)).